The sequence spans 461 residues: Aldehyde dehydrogenase LUC3 (461 aa).

Residue 215-220 (GSTATG) participates in NAD(+) binding. Active-site residues include Glu-237 and Cys-271.

The protein belongs to the aldehyde dehydrogenase family.

The catalysed reaction is an aldehyde + NAD(+) + H2O = a carboxylate + NADH + 2 H(+). The protein operates within mycotoxin biosynthesis. Its function is as follows. Aldehyde dehydrogenase; part of the gene cluster that mediates the biosynthesis of the mycotoxin lucilactaene and the lucilactaene-related compound NG-391 that act as cell cycle inhibitors with potent growth inhibitory activity against malarial parasites, moderate growth inhibitory activity against cancer cells, and no activity against bacteria and fungi. LUC3 is important for lucilactaene biosynthesis and performs the oxidation of the C-20 alcoholic analog prelucilactaene G into a carboxylic derivative that has still to be identified. The pathway begins with the hybrid PKS-NRPS synthetase LUC5 which is responsible for the condensation of one acetyl-coenzyme A (CoA) unit with six malonyl-CoA units and the amide linkage of the arising heptaketide and homoserine, subsequently releasing the first intermediate prelucilactaene B. Both the cytochrome P450 monooxygenase LUC2 and the hydrolase LUC6 function in parallel in modification of prelucilactaene B. LUC6 may catalyze the 2-pyrrolidone ring formation to form prelucilactaene C from prelucilactaene B, followed by C-15 hydroxylation by the same enzyme to give prelucilactaene D, which is then converted to prelucilactaene E by epoxidation, and finally to prelucilactaene F by cyclization. Prelucilactane D, prelucilactaene E, and prelucilactaene F can be converted to dihydrolucilactaene, NG391, and lucilactaene, respectively, via C-20 methyl group hydroxylation by the cytochrome P450 monooxygenase LUC2. However, LUC2, unlike FUS8 in fusarin C biosynthesis, is not enough for the full oxidation of the C-20 methyl group into carboxylic acid, which is a prerequisite for the final methylation step. The aldehyde dehydrogenase LUC3 is involved in the biosynthesis by further oxidation of the C-20 alcoholic analog prelucilactaene G into a carboxylic derivative. This unidentified carboxylic derivative may be converted to demethyllucilactaene. As the last step, the methyltransferase LUC1 methylates the hydroxyl group at C-21 of demethyllucilactaene to generate lucilactaene. This Fusarium sp protein is Aldehyde dehydrogenase LUC3.